The following is a 521-amino-acid chain: 2,3-bisphosphoglycerate-independent phosphoglycerate mutase (521 aa).

Mn(2+) is bound by residues D18 and S68. S68 acts as the Phosphoserine intermediate in catalysis. Residues H129, 158–159 (RD), R190, R196, 266–269 (RSDR), and K343 each bind substrate. 5 residues coordinate Mn(2+): D410, H414, D451, H452, and H470.

This sequence belongs to the BPG-independent phosphoglycerate mutase family. Monomer. It depends on Mn(2+) as a cofactor.

The catalysed reaction is (2R)-2-phosphoglycerate = (2R)-3-phosphoglycerate. It functions in the pathway carbohydrate degradation; glycolysis; pyruvate from D-glyceraldehyde 3-phosphate: step 3/5. Functionally, catalyzes the interconversion of 2-phosphoglycerate and 3-phosphoglycerate. The polypeptide is 2,3-bisphosphoglycerate-independent phosphoglycerate mutase (Hydrogenovibrio crunogenus (strain DSM 25203 / XCL-2) (Thiomicrospira crunogena)).